Here is a 248-residue protein sequence, read N- to C-terminus: 3-deoxy-manno-octulosonate cytidylyltransferase (248 aa).

Belongs to the KdsB family.

It localises to the cytoplasm. The enzyme catalyses 3-deoxy-alpha-D-manno-oct-2-ulosonate + CTP = CMP-3-deoxy-beta-D-manno-octulosonate + diphosphate. The protein operates within nucleotide-sugar biosynthesis; CMP-3-deoxy-D-manno-octulosonate biosynthesis; CMP-3-deoxy-D-manno-octulosonate from 3-deoxy-D-manno-octulosonate and CTP: step 1/1. Its pathway is bacterial outer membrane biogenesis; lipopolysaccharide biosynthesis. Functionally, activates KDO (a required 8-carbon sugar) for incorporation into bacterial lipopolysaccharide in Gram-negative bacteria. This chain is 3-deoxy-manno-octulosonate cytidylyltransferase, found in Salmonella enteritidis PT4 (strain P125109).